The following is a 200-amino-acid chain: TATA-box-binding protein 2 (200 aa).

Tandem repeats lie at residues 25–101 and 115–192.

This sequence belongs to the TBP family. In terms of assembly, belongs to the TFIID complex together with the TBP-associated factors (TAFs). Binds DNA as monomer. Interacts with TAF1 (via N-terminus). Interacts with TFIIB1. Interacts with PTF2. Interacts with HAT5/ATHB-1 and ATHB-7. Component of a nuclear protein complex containing at least TATA binding proteins (TBPs, e.g. TBP1 and TBP2) and ATX1.

The protein localises to the nucleus. General transcription factor (GTF) that functions at the core of the DNA-binding multiprotein factor TFIID. Binding of TFIID to the TATA box is the initial transcriptional step of the pre-initiation complex (PIC), playing a role in the activation of eukaryotic genes transcribed by RNA polymerase II. Interacts with TFIIB1 and is required for activated transcription and possibly basal transcription. May act as GTF of RNA polymerase I-dependent transcription and rRNA synthesis. Forms a ternary complex with PBRP1 and the rDNA promoter region. The chain is TATA-box-binding protein 2 from Arabidopsis thaliana (Mouse-ear cress).